A 57-amino-acid polypeptide reads, in one-letter code: Large ribosomal subunit protein bL33 (57 aa).

This sequence belongs to the bacterial ribosomal protein bL33 family.

The polypeptide is Large ribosomal subunit protein bL33 (Shewanella pealeana (strain ATCC 700345 / ANG-SQ1)).